A 493-amino-acid chain; its full sequence is ATP synthase subunit beta, chloroplastic (493 aa).

170 to 177 (GGAGVGKT) contacts ATP.

Belongs to the ATPase alpha/beta chains family. F-type ATPases have 2 components, CF(1) - the catalytic core - and CF(0) - the membrane proton channel. CF(1) has five subunits: alpha(3), beta(3), gamma(1), delta(1), epsilon(1). CF(0) has four main subunits: a(1), b(1), b'(1) and c(9-12).

It is found in the plastid. It localises to the chloroplast thylakoid membrane. It carries out the reaction ATP + H2O + 4 H(+)(in) = ADP + phosphate + 5 H(+)(out). Functionally, produces ATP from ADP in the presence of a proton gradient across the membrane. The catalytic sites are hosted primarily by the beta subunits. In Chaetosphaeridium globosum (Charophycean green alga), this protein is ATP synthase subunit beta, chloroplastic.